We begin with the raw amino-acid sequence, 543 residues long: Cytochrome P450 monooxygenase 205 (543 aa).

Residues 9-29 form a helical membrane-spanning segment; it reads LISLGVAALAVAVWKAIVMVI. N-linked (GlcNAc...) asparagine glycosylation is found at asparagine 332 and asparagine 434. Cysteine 479 provides a ligand contact to heme.

The protein belongs to the cytochrome P450 family. Heme is required as a cofactor.

The protein localises to the membrane. It participates in secondary metabolite biosynthesis. Cytochrome P450 monooxygenase that is able to use carbazole and phenanthrene as substrates for oxidation. The chain is Cytochrome P450 monooxygenase 205 from Postia placenta (strain ATCC 44394 / Madison 698-R) (Brown rot fungus).